The following is a 261-amino-acid chain: Ribosomal RNA small subunit methyltransferase A (261 aa).

S-adenosyl-L-methionine contacts are provided by asparagine 11, leucine 13, glycine 38, glutamate 59, aspartate 84, and serine 106.

Belongs to the class I-like SAM-binding methyltransferase superfamily. rRNA adenine N(6)-methyltransferase family. RsmA subfamily.

The protein resides in the cytoplasm. It carries out the reaction adenosine(1518)/adenosine(1519) in 16S rRNA + 4 S-adenosyl-L-methionine = N(6)-dimethyladenosine(1518)/N(6)-dimethyladenosine(1519) in 16S rRNA + 4 S-adenosyl-L-homocysteine + 4 H(+). Functionally, specifically dimethylates two adjacent adenosines (A1518 and A1519) in the loop of a conserved hairpin near the 3'-end of 16S rRNA in the 30S particle. May play a critical role in biogenesis of 30S subunits. This Wigglesworthia glossinidia brevipalpis protein is Ribosomal RNA small subunit methyltransferase A.